Here is a 157-residue protein sequence, read N- to C-terminus: Small ribosomal subunit protein uS7 (157 aa).

This sequence belongs to the universal ribosomal protein uS7 family. In terms of assembly, part of the 30S ribosomal subunit. Contacts proteins S9 and S11.

One of the primary rRNA binding proteins, it binds directly to 16S rRNA where it nucleates assembly of the head domain of the 30S subunit. Is located at the subunit interface close to the decoding center, probably blocks exit of the E-site tRNA. The sequence is that of Small ribosomal subunit protein uS7 from Opitutus terrae (strain DSM 11246 / JCM 15787 / PB90-1).